Consider the following 353-residue polypeptide: Photosystem II protein D1 (353 aa).

N-acetylthreonine is present on threonine 2. Threonine 2 bears the Phosphothreonine mark. A run of 3 helical transmembrane segments spans residues 29–46 (YIGW…TATS), 118–133 (HFLL…EWEL), and 142–156 (WIAV…AATA). Position 118 (histidine 118) interacts with chlorophyll a. Tyrosine 126 contributes to the pheophytin a binding site. The [CaMn4O5] cluster site is built by aspartate 170 and glutamate 189. A helical membrane pass occupies residues 197-218 (FHMLGVAGVFGGSLFSAMHGSL). Histidine 198 serves as a coordination point for chlorophyll a. A quinone contacts are provided by residues histidine 215 and 264-265 (SF). Position 215 (histidine 215) interacts with Fe cation. Residue histidine 272 participates in Fe cation binding. The helical transmembrane segment at 274–288 (FLAAWPVVGIWFTAL) threads the bilayer. [CaMn4O5] cluster-binding residues include histidine 332, glutamate 333, and alanine 344. A propeptide spanning residues 345 to 353 (AIEAPAVNG) is cleaved from the precursor.

Belongs to the reaction center PufL/M/PsbA/D family. As to quaternary structure, PSII is composed of 1 copy each of membrane proteins PsbA, PsbB, PsbC, PsbD, PsbE, PsbF, PsbH, PsbI, PsbJ, PsbK, PsbL, PsbM, PsbT, PsbX, PsbY, PsbZ, Psb30/Ycf12, at least 3 peripheral proteins of the oxygen-evolving complex and a large number of cofactors. It forms dimeric complexes. The cofactor is The D1/D2 heterodimer binds P680, chlorophylls that are the primary electron donor of PSII, and subsequent electron acceptors. It shares a non-heme iron and each subunit binds pheophytin, quinone, additional chlorophylls, carotenoids and lipids. D1 provides most of the ligands for the Mn4-Ca-O5 cluster of the oxygen-evolving complex (OEC). There is also a Cl(-1) ion associated with D1 and D2, which is required for oxygen evolution. The PSII complex binds additional chlorophylls, carotenoids and specific lipids.. Post-translationally, tyr-161 forms a radical intermediate that is referred to as redox-active TyrZ, YZ or Y-Z. C-terminally processed by CTPA; processing is essential to allow assembly of the oxygen-evolving complex and thus photosynthetic growth.

It localises to the plastid. Its subcellular location is the chloroplast thylakoid membrane. It carries out the reaction 2 a plastoquinone + 4 hnu + 2 H2O = 2 a plastoquinol + O2. Photosystem II (PSII) is a light-driven water:plastoquinone oxidoreductase that uses light energy to abstract electrons from H(2)O, generating O(2) and a proton gradient subsequently used for ATP formation. It consists of a core antenna complex that captures photons, and an electron transfer chain that converts photonic excitation into a charge separation. The D1/D2 (PsbA/PsbD) reaction center heterodimer binds P680, the primary electron donor of PSII as well as several subsequent electron acceptors. The polypeptide is Photosystem II protein D1 (Conocephalum japonicum (Liverwort)).